The chain runs to 776 residues: E3 ubiquitin-protein ligase UHRF1 (776 aa).

The region spanning 1 to 78 (MWIQVRTMDG…VQLLVRQAVA (78 aa)) is the Ubiquitin-like domain. The tract at residues 88–126 (AELSDSDSGCGSAQSESDKGSTHGESDVQSAGASGQTDT) is disordered. Polar residues predominate over residues 93-102 (SDSGCGSAQS). Over residues 103–113 (ESDKGSTHGES) the composition is skewed to basic and acidic residues. Positions 114-126 (DVQSAGASGQTDT) are enriched in polar residues. Tudor-like regions lie at residues 135–201 (GFYK…PRAR) and 208–277 (QLEP…IEEP). The segment at 278-298 (GSAEGPGASSDSPLKKGSNGP) is disordered. The interval 290–299 (PLKKGSNGPE) is linker. The PHD-type zinc finger occupies 297-364 (GPECKVCKDD…DWYCPDCRND (68 aa)). Histone H3R2me0 binding regions lie at residues 331-335 (CDECD) and 351-353 (PDD). The YDG domain maps to 417-580 (GPVPGVPVGT…FLVWRYLLKR (164 aa)). Positions 443 to 444 (HV) are required to promote base flipping. DNA-binding positions include 461–462 (AG) and D467. 2 required for formation of a 5-methylcytosine-binding pocket regions span residues 464–467 (YEDD) and 476–479 (YTGS). Positions 617–660 (EKEKENKNEDDIEETPTKGKRKRKSQSMEEKSSPTKGTPKKMKV) are disordered. S649 bears the Phosphoserine; by CDK2 mark. Residues 706–745 (CICCQEVVYQPITTECQHNVCRECLQRSFKAKVYTCPACR) form an RING-type zinc finger.

Phosphorylation at Ser-649 is required for gastrulation. Expressed in proliferating tissues. Highly expressed 24-48 hours after fertilization (hpf) in rapidly proliferating tissues, including the tectum, retina and brachial arches. Preferentially expressed in the liver bud and expression is maintained in the fully developed liver. Also expressed in the proximal gut. In adult, the highest expression is detected in testis.

Its subcellular location is the nucleus. It is found in the cytoplasm. The enzyme catalyses S-ubiquitinyl-[E2 ubiquitin-conjugating enzyme]-L-cysteine + [acceptor protein]-L-lysine = [E2 ubiquitin-conjugating enzyme]-L-cysteine + N(6)-ubiquitinyl-[acceptor protein]-L-lysine.. The protein operates within protein modification; protein ubiquitination. Multidomain protein that acts as a key epigenetic regulator by bridging DNA methylation and chromatin modification. Specifically recognizes and binds hemimethylated DNA at replication forks via its YDG domain and recruits dnmt1 methyltransferase to ensure faithful propagation of the DNA methylation patterns through DNA replication. In addition to its role in maintenance of DNA methylation, also plays a key role in chromatin modification: through its tudor-like regions and PHD-type zinc fingers, specifically recognizes and binds histone H3 trimethylated at 'Lys-9' (H3K9me3) and unmethylated at 'Arg-2' (H3R2me0), respectively, and recruits chromatin proteins. Enriched in pericentric heterochromatin where it recruits different chromatin modifiers required for this chromatin replication. Also localizes to euchromatic regions where it negatively regulates transcription possibly by impacting DNA methylation and histone modifications. Has E3 ubiquitin-protein ligase activity by mediating the ubiquitination of target proteins. However, it is still unclear how E3 ubiquitin-protein ligase activity is related to its role in chromatin in vivo. Required for pregastrula and lens development. This is E3 ubiquitin-protein ligase UHRF1 (uhrf1) from Danio rerio (Zebrafish).